The primary structure comprises 146 residues: MASRRRARQRALQILFIWDARKQPVEDAINAYYDTLYSDEKPERDPFVIDLVRGTVEHLAEVDDRITRHAEHWRMERMPAVDRNILRLAVYEMTRGGTPAPVTIDEALELARKFSNEESVQFVNGVLDAVRREMPEPNAPPARLNS.

Belongs to the NusB family.

In terms of biological role, involved in transcription antitermination. Required for transcription of ribosomal RNA (rRNA) genes. Binds specifically to the boxA antiterminator sequence of the ribosomal RNA (rrn) operons. This chain is Transcription antitermination protein NusB, found in Solibacter usitatus (strain Ellin6076).